The primary structure comprises 307 residues: Transaldolase (307 aa).

Lys-125 serves as the catalytic Schiff-base intermediate with substrate.

It belongs to the transaldolase family. Type 1 subfamily.

The protein localises to the cytoplasm. The enzyme catalyses D-sedoheptulose 7-phosphate + D-glyceraldehyde 3-phosphate = D-erythrose 4-phosphate + beta-D-fructose 6-phosphate. It functions in the pathway carbohydrate degradation; pentose phosphate pathway; D-glyceraldehyde 3-phosphate and beta-D-fructose 6-phosphate from D-ribose 5-phosphate and D-xylulose 5-phosphate (non-oxidative stage): step 2/3. Its function is as follows. Transaldolase is important for the balance of metabolites in the pentose-phosphate pathway. The chain is Transaldolase from Pseudomonas aeruginosa (strain ATCC 15692 / DSM 22644 / CIP 104116 / JCM 14847 / LMG 12228 / 1C / PRS 101 / PAO1).